A 308-amino-acid chain; its full sequence is GMP synthase [glutamine-hydrolyzing] subunit B (308 aa).

Positions Met-1–Arg-185 constitute a GMPS ATP-PPase domain. ATP is bound at residue Ser-28–Ser-34.

Heterodimer composed of a glutamine amidotransferase subunit (A) and a GMP-binding subunit (B).

The enzyme catalyses XMP + L-glutamine + ATP + H2O = GMP + L-glutamate + AMP + diphosphate + 2 H(+). It functions in the pathway purine metabolism; GMP biosynthesis; GMP from XMP (L-Gln route): step 1/1. Its function is as follows. Catalyzes the synthesis of GMP from XMP. This Pyrococcus horikoshii (strain ATCC 700860 / DSM 12428 / JCM 9974 / NBRC 100139 / OT-3) protein is GMP synthase [glutamine-hydrolyzing] subunit B (guaAB).